The following is a 293-amino-acid chain: 33 kDa chaperonin (293 aa).

2 disulfides stabilise this stretch: Cys-238–Cys-240 and Cys-271–Cys-274.

This sequence belongs to the HSP33 family. Under oxidizing conditions two disulfide bonds are formed involving the reactive cysteines. Under reducing conditions zinc is bound to the reactive cysteines and the protein is inactive.

The protein localises to the cytoplasm. Its function is as follows. Redox regulated molecular chaperone. Protects both thermally unfolding and oxidatively damaged proteins from irreversible aggregation. Plays an important role in the bacterial defense system toward oxidative stress. The protein is 33 kDa chaperonin of Clostridium beijerinckii (strain ATCC 51743 / NCIMB 8052) (Clostridium acetobutylicum).